The chain runs to 238 residues: ATP synthase subunit a (238 aa).

5 consecutive transmembrane segments (helical) span residues 15-35 (IFNL…FVFI), 76-96 (YSLF…LGLM), 111-131 (PTAN…LTHI), 167-187 (LALR…LLLL), and 208-230 (AFSV…VYLG).

Belongs to the ATPase A chain family. In terms of assembly, F-type ATPases have 2 components, CF(1) - the catalytic core - and CF(0) - the membrane proton channel. CF(1) has five subunits: alpha(3), beta(3), gamma(1), delta(1), epsilon(1). CF(0) has three main subunits: a(1), b(2) and c(9-12). The alpha and beta chains form an alternating ring which encloses part of the gamma chain. CF(1) is attached to CF(0) by a central stalk formed by the gamma and epsilon chains, while a peripheral stalk is formed by the delta and b chains.

The protein localises to the cell membrane. Functionally, key component of the proton channel; it plays a direct role in the translocation of protons across the membrane. This is ATP synthase subunit a from Streptococcus pneumoniae (strain 70585).